A 250-amino-acid polypeptide reads, in one-letter code: Triosephosphate isomerase (250 aa).

Substrate is bound at residue 9–11 (NWK). The active-site Electrophile is the His-96. Glu-166 acts as the Proton acceptor in catalysis. Residues Gly-172, Ser-212, and 233–234 (GG) contribute to the substrate site.

Belongs to the triosephosphate isomerase family. As to quaternary structure, homodimer.

It localises to the cytoplasm. The enzyme catalyses D-glyceraldehyde 3-phosphate = dihydroxyacetone phosphate. Its pathway is carbohydrate biosynthesis; gluconeogenesis. It participates in carbohydrate degradation; glycolysis; D-glyceraldehyde 3-phosphate from glycerone phosphate: step 1/1. Involved in the gluconeogenesis. Catalyzes stereospecifically the conversion of dihydroxyacetone phosphate (DHAP) to D-glyceraldehyde-3-phosphate (G3P). The protein is Triosephosphate isomerase of Chlorobium phaeobacteroides (strain BS1).